Consider the following 692-residue polypeptide: MHDELEKAGRHLLMVNDHLSEDSVEQGDICMTQVPTMFSDDEDQDEEQETEIPPEEGDDDILISTQVQGAIDELNHQETVVHTFRNVLSRFALETQDQADIPLVSSKKVPVKKVIKSSKVKQPTARLQKRIKSITQFNTDNWESNRVKDRAQKMISILSGKSAKVKKLVSKLDSEASADAESLQDSHPTQFAPFNESEWQHIVGLLREKLPKVSRSELNSVQQYVYGADEQHNLWKASQLSPEKQISSQCSDGESETILPSLTLDNNAPVYTLSQLVEGESSNNRCSTEDGLRFKPISNPSSVIEQELPISIDVPSSETDVPSQIADSCDSGSIISFEELSFMIQDKNKADVDYDIPCYLPPDSKTLPTGEKTKREYSRANINDQLINISQTSYDVVSSIVSPMKAQRTGTIQVPATRTTTFQDQQQQNQQQASKPANVVKIYVDSNRDSNDVFASVKGEVDTQEQESLSTLTTSMLHDDNNEIVIDSEDERGSYSIMEVHDAPQTHLGQFPSLRKSQSQKLKTPVSATDSLDSQLQPALLTTQNASPNTAKLRRSFKVIGLKPCKNKVQMLQVWETLESKFPGSSDEDRSIQLKQFLTDLIVQNRDESALLMEQIYTFEPIRYEQLKEWLVSLNSFTELIDDSFIKNWADLNGIVFRNDTENPLLSQSQSQSQSRLLSQSLSQLQSPSLSP.

Residues 39-59 (SDDEDQDEEQETEIPPEEGDD) are disordered.

This sequence belongs to the SLX4 family. In terms of assembly, forms a heterodimer with SLX1. Phosphorylated in response to DNA damage.

The protein resides in the nucleus. In terms of biological role, regulatory subunit of the SLX1-SLX4 structure-specific endonuclease that resolves DNA secondary structures generated during DNA repair and recombination. Has endonuclease activity towards branched DNA substrates, introducing single-strand cuts in duplex DNA close to junctions with ss-DNA. This is Structure-specific endonuclease subunit SLX4 from Kluyveromyces lactis (strain ATCC 8585 / CBS 2359 / DSM 70799 / NBRC 1267 / NRRL Y-1140 / WM37) (Yeast).